A 121-amino-acid polypeptide reads, in one-letter code: Small ribosomal subunit protein uS13 (121 aa).

Residues 97–121 (VRGQRTRTNARTRRGARKTVAGKKK) are disordered. Basic residues predominate over residues 100–121 (QRTRTNARTRRGARKTVAGKKK).

The protein belongs to the universal ribosomal protein uS13 family. Part of the 30S ribosomal subunit. Forms a loose heterodimer with protein S19. Forms two bridges to the 50S subunit in the 70S ribosome.

Its function is as follows. Located at the top of the head of the 30S subunit, it contacts several helices of the 16S rRNA. In the 70S ribosome it contacts the 23S rRNA (bridge B1a) and protein L5 of the 50S subunit (bridge B1b), connecting the 2 subunits; these bridges are implicated in subunit movement. Contacts the tRNAs in the A and P-sites. This chain is Small ribosomal subunit protein uS13, found in Synechococcus sp. (strain WH7803).